Here is an 88-residue protein sequence, read N- to C-terminus: Small ribosomal subunit protein uS17 (88 aa).

It belongs to the universal ribosomal protein uS17 family. Part of the 30S ribosomal subunit.

One of the primary rRNA binding proteins, it binds specifically to the 5'-end of 16S ribosomal RNA. This Nitrosospira multiformis (strain ATCC 25196 / NCIMB 11849 / C 71) protein is Small ribosomal subunit protein uS17.